The chain runs to 506 residues: Maturase K (506 aa).

Belongs to the intron maturase 2 family. MatK subfamily.

It localises to the plastid. It is found in the chloroplast. Usually encoded in the trnK tRNA gene intron. Probably assists in splicing its own and other chloroplast group II introns. This is Maturase K from Phyllodoce empetriformis (Pink mountainheath).